The chain runs to 285 residues: Glutamate racemase (285 aa).

Residues 28 to 29 and 60 to 61 contribute to the substrate site; these read DS and YG. Cys92 acts as the Proton donor/acceptor in catalysis. Residue 93–94 coordinates substrate; it reads NT. Cys204 functions as the Proton donor/acceptor in the catalytic mechanism. 205–206 provides a ligand contact to substrate; it reads TH.

It belongs to the aspartate/glutamate racemases family.

The enzyme catalyses L-glutamate = D-glutamate. It functions in the pathway cell wall biogenesis; peptidoglycan biosynthesis. Functionally, provides the (R)-glutamate required for cell wall biosynthesis. The sequence is that of Glutamate racemase from Escherichia coli O7:K1 (strain IAI39 / ExPEC).